The primary structure comprises 107 residues: Nucleoid-associated protein Hhal_0231 (107 aa).

2 disordered regions span residues methionine 1 to glutamate 24 and valine 82 to phenylalanine 107. Basic and acidic residues predominate over residues methionine 15 to glutamate 24.

Belongs to the YbaB/EbfC family. In terms of assembly, homodimer.

Its subcellular location is the cytoplasm. The protein resides in the nucleoid. In terms of biological role, binds to DNA and alters its conformation. May be involved in regulation of gene expression, nucleoid organization and DNA protection. The sequence is that of Nucleoid-associated protein Hhal_0231 from Halorhodospira halophila (strain DSM 244 / SL1) (Ectothiorhodospira halophila (strain DSM 244 / SL1)).